Consider the following 360-residue polypeptide: Geranylgeranyl pyrophosphate synthase 9, chloroplastic (360 aa).

A chloroplast-targeting transit peptide spans 1–39 (MATTVHLSSSSLFSQSRGRRDNSISSVKSLRKRTVLSLS). Lysine 106, arginine 109, and histidine 138 together coordinate isopentenyl diphosphate. Residues aspartate 145 and aspartate 151 each contribute to the Mg(2+) site. Arginine 156 provides a ligand contact to dimethylallyl diphosphate. Arginine 157 is an isopentenyl diphosphate binding site. Residues lysine 245, threonine 246, glutamine 283, lysine 300, and lysine 310 each contribute to the dimethylallyl diphosphate site.

The protein belongs to the FPP/GGPP synthase family. As to quaternary structure, monomer. No interactions with GGR. Mg(2+) serves as cofactor.

It is found in the plastid. The protein localises to the chloroplast. The enzyme catalyses isopentenyl diphosphate + dimethylallyl diphosphate = (2E)-geranyl diphosphate + diphosphate. It carries out the reaction isopentenyl diphosphate + (2E)-geranyl diphosphate = (2E,6E)-farnesyl diphosphate + diphosphate. It catalyses the reaction isopentenyl diphosphate + (2E,6E)-farnesyl diphosphate = (2E,6E,10E)-geranylgeranyl diphosphate + diphosphate. The protein operates within isoprenoid biosynthesis; farnesyl diphosphate biosynthesis; farnesyl diphosphate from geranyl diphosphate and isopentenyl diphosphate: step 1/1. It functions in the pathway isoprenoid biosynthesis; geranyl diphosphate biosynthesis; geranyl diphosphate from dimethylallyl diphosphate and isopentenyl diphosphate: step 1/1. Its pathway is isoprenoid biosynthesis; geranylgeranyl diphosphate biosynthesis; geranylgeranyl diphosphate from farnesyl diphosphate and isopentenyl diphosphate: step 1/1. Its function is as follows. Catalyzes the trans-addition of the three molecules of IPP onto DMAPP to form geranylgeranyl pyrophosphate. This is Geranylgeranyl pyrophosphate synthase 9, chloroplastic (GGPPS9) from Arabidopsis thaliana (Mouse-ear cress).